The sequence spans 132 residues: Transcription antitermination protein NusB (132 aa).

This sequence belongs to the NusB family.

In terms of biological role, involved in transcription antitermination. Required for transcription of ribosomal RNA (rRNA) genes. Binds specifically to the boxA antiterminator sequence of the ribosomal RNA (rrn) operons. The sequence is that of Transcription antitermination protein NusB from Campylobacter lari (strain RM2100 / D67 / ATCC BAA-1060).